Reading from the N-terminus, the 474-residue chain is Glutamyl-tRNA(Gln) amidotransferase subunit A (474 aa).

Active-site charge relay system residues include Lys76 and Ser151. The active-site Acyl-ester intermediate is the Ser175.

Belongs to the amidase family. GatA subfamily. As to quaternary structure, heterotrimer of A, B and C subunits.

It carries out the reaction L-glutamyl-tRNA(Gln) + L-glutamine + ATP + H2O = L-glutaminyl-tRNA(Gln) + L-glutamate + ADP + phosphate + H(+). Functionally, allows the formation of correctly charged Gln-tRNA(Gln) through the transamidation of misacylated Glu-tRNA(Gln) in organisms which lack glutaminyl-tRNA synthetase. The reaction takes place in the presence of glutamine and ATP through an activated gamma-phospho-Glu-tRNA(Gln). In Chlorobium chlorochromatii (strain CaD3), this protein is Glutamyl-tRNA(Gln) amidotransferase subunit A.